Consider the following 31-residue polypeptide: Cyclotide cter-E (31 aa).

The segment at residues 1 to 31 (GIPCAESCVWIPCTVTALLGCSCKDKVCYLD) is a cross-link (cyclopeptide (Gly-Asp)). Cystine bridges form between Cys-4–Cys-21, Cys-8–Cys-23, and Cys-13–Cys-28.

In terms of processing, contains 3 disulfide bonds. Post-translationally, this is a cyclic peptide.

Probably participates in a plant defense mechanism. The chain is Cyclotide cter-E from Clitoria ternatea (Butterfly pea).